A 143-amino-acid polypeptide reads, in one-letter code: Small ribosomal subunit protein eS19B (143 aa).

The protein belongs to the eukaryotic ribosomal protein eS19 family. In terms of assembly, component of the small ribosomal subunit (SSU). Mature yeast ribosomes consist of a small (40S) and a large (60S) subunit. The 40S small subunit contains 1 molecule of ribosomal RNA (18S rRNA) and at least 33 different proteins. The large 60S subunit contains 3 rRNA molecules (25S, 5.8S and 5S rRNA) and at least 46 different proteins.

It is found in the cytoplasm. The protein resides in the nucleus. Functionally, component of the ribosome, a large ribonucleoprotein complex responsible for the synthesis of proteins in the cell. The small ribosomal subunit (SSU) binds messenger RNAs (mRNAs) and translates the encoded message by selecting cognate aminoacyl-transfer RNA (tRNA) molecules. The large subunit (LSU) contains the ribosomal catalytic site termed the peptidyl transferase center (PTC), which catalyzes the formation of peptide bonds, thereby polymerizing the amino acids delivered by tRNAs into a polypeptide chain. The nascent polypeptides leave the ribosome through a tunnel in the LSU and interact with protein factors that function in enzymatic processing, targeting, and the membrane insertion of nascent chains at the exit of the ribosomal tunnel. eS19 is required for proper maturation of the small (40S) ribosomal subunit. Binds to 40S pre-ribosomal particles, probably required after association of NOC4 but before association of ENP1, TSR1 and RIO2 with 20/21S pre-rRNA. The polypeptide is Small ribosomal subunit protein eS19B (rps1902) (Schizosaccharomyces pombe (strain 972 / ATCC 24843) (Fission yeast)).